An 89-amino-acid chain; its full sequence is Neuropeptide S (89 aa).

The N-terminal stretch at Met1–Cys23 is a signal peptide. The propeptide occupies Tyr24–Arg69.

Its subcellular location is the secreted. Functionally, may play an important anorexigenic role. Modulates arousal and anxiety as well as increases locomotor activity. Binds to its receptor NPSR1 with nanomolar affinity to increase intracellular calcium concentrations. The sequence is that of Neuropeptide S (Nps) from Mus musculus (Mouse).